The sequence spans 396 residues: Probable mannan endo-1,4-beta-mannosidase A-2 (396 aa).

An N-terminal signal peptide occupies residues M1–A21. Substrate is bound at residue W99. N120 is a glycosylation site (N-linked (GlcNAc...) asparagine). N212 contacts substrate. The active-site Proton donor is E213. N-linked (GlcNAc...) asparagine glycosylation is present at N270. Substrate is bound at residue Y288. E321 acts as the Nucleophile in catalysis. Residue W351 coordinates substrate.

It belongs to the glycosyl hydrolase 5 (cellulase A) family.

It localises to the secreted. It catalyses the reaction Random hydrolysis of (1-&gt;4)-beta-D-mannosidic linkages in mannans, galactomannans and glucomannans.. Functionally, endo-1,4-mannanase, a crucial enzyme for depolymerization of seed galactomannans and wood galactoglucomannans. In Aspergillus terreus (strain NIH 2624 / FGSC A1156), this protein is Probable mannan endo-1,4-beta-mannosidase A-2 (manA-2).